Here is a 612-residue protein sequence, read N- to C-terminus: Dihydroxy-acid dehydratase (612 aa).

Asp-81 provides a ligand contact to Mg(2+). Cys-122 provides a ligand contact to [2Fe-2S] cluster. Residues Asp-123 and Lys-124 each coordinate Mg(2+). Lys-124 is subject to N6-carboxylysine. Cys-196 lines the [2Fe-2S] cluster pocket. Position 492 (Glu-492) interacts with Mg(2+). The Proton acceptor role is filled by Ser-518.

Belongs to the IlvD/Edd family. Homodimer. The cofactor is [2Fe-2S] cluster. Requires Mg(2+) as cofactor.

The enzyme catalyses (2R)-2,3-dihydroxy-3-methylbutanoate = 3-methyl-2-oxobutanoate + H2O. It carries out the reaction (2R,3R)-2,3-dihydroxy-3-methylpentanoate = (S)-3-methyl-2-oxopentanoate + H2O. The protein operates within amino-acid biosynthesis; L-isoleucine biosynthesis; L-isoleucine from 2-oxobutanoate: step 3/4. It functions in the pathway amino-acid biosynthesis; L-valine biosynthesis; L-valine from pyruvate: step 3/4. Its function is as follows. Functions in the biosynthesis of branched-chain amino acids. Catalyzes the dehydration of (2R,3R)-2,3-dihydroxy-3-methylpentanoate (2,3-dihydroxy-3-methylvalerate) into 2-oxo-3-methylpentanoate (2-oxo-3-methylvalerate) and of (2R)-2,3-dihydroxy-3-methylbutanoate (2,3-dihydroxyisovalerate) into 2-oxo-3-methylbutanoate (2-oxoisovalerate), the penultimate precursor to L-isoleucine and L-valine, respectively. The protein is Dihydroxy-acid dehydratase of Paracoccus denitrificans (strain Pd 1222).